Here is a 203-residue protein sequence, read N- to C-terminus: Cytochrome c oxidase assembly protein CtaG (203 aa).

The Cytoplasmic portion of the chain corresponds to 1 to 19 (MDAGKAERRAGNGRRTDGR). Residues 20–42 (RHLVVAAACAAFIAAMVGVTYAS) traverse the membrane as a helical; Signal-anchor for type II membrane protein segment. Over 43-203 (VPLYAMFCAL…AAARASGTGG (161 aa)) the chain is Periplasmic.

Belongs to the COX11/CtaG family.

It is found in the cell inner membrane. Functionally, exerts its effect at some terminal stage of cytochrome c oxidase synthesis, probably by being involved in the insertion of the copper B into subunit I. In Xanthobacter autotrophicus (strain ATCC BAA-1158 / Py2), this protein is Cytochrome c oxidase assembly protein CtaG.